The chain runs to 216 residues: MLDREGFRPNVGIILLNARNEVFWGKRLREHSWQFPQGGIKYGETPMQAMYRELHEETGLHPEHVKIIGRTRDWLRYEVPDKFIKREVRGHYRGQKQIWFLLRMVGRDCDICLRATDHPEFDAWRWNEYWVPLDAVIEFKRDVYQLALTELSRFLRRPAQRADKPQGPRPSSRYPRVIGTQSQQTLTIVDTSVVCSEIEVEASTLDEMPPRVIVGK.

Residues 6-149 (GFRPNVGIIL…KRDVYQLALT (144 aa)) enclose the Nudix hydrolase domain. A Nudix box motif is present at residues 38-59 (GGIKYGETPMQAMYRELHEETG).

The protein belongs to the Nudix hydrolase family. RppH subfamily. A divalent metal cation is required as a cofactor.

Accelerates the degradation of transcripts by removing pyrophosphate from the 5'-end of triphosphorylated RNA, leading to a more labile monophosphorylated state that can stimulate subsequent ribonuclease cleavage. The polypeptide is RNA pyrophosphohydrolase (Burkholderia ambifaria (strain MC40-6)).